Reading from the N-terminus, the 369-residue chain is Phenylalanine--tRNA ligase alpha subunit (369 aa).

E270 contacts Mg(2+).

Belongs to the class-II aminoacyl-tRNA synthetase family. Phe-tRNA synthetase alpha subunit type 1 subfamily. As to quaternary structure, tetramer of two alpha and two beta subunits. Requires Mg(2+) as cofactor.

The protein resides in the cytoplasm. The enzyme catalyses tRNA(Phe) + L-phenylalanine + ATP = L-phenylalanyl-tRNA(Phe) + AMP + diphosphate + H(+). In Phenylobacterium zucineum (strain HLK1), this protein is Phenylalanine--tRNA ligase alpha subunit.